The sequence spans 174 residues: Crossover junction endodeoxyribonuclease RuvC (174 aa).

Residues D8, E67, and D139 contribute to the active site. Residues D8, E67, and D139 each contribute to the Mg(2+) site.

The protein belongs to the RuvC family. Homodimer which binds Holliday junction (HJ) DNA. The HJ becomes 2-fold symmetrical on binding to RuvC with unstacked arms; it has a different conformation from HJ DNA in complex with RuvA. In the full resolvosome a probable DNA-RuvA(4)-RuvB(12)-RuvC(2) complex forms which resolves the HJ. The cofactor is Mg(2+).

It localises to the cytoplasm. It catalyses the reaction Endonucleolytic cleavage at a junction such as a reciprocal single-stranded crossover between two homologous DNA duplexes (Holliday junction).. Its function is as follows. The RuvA-RuvB-RuvC complex processes Holliday junction (HJ) DNA during genetic recombination and DNA repair. Endonuclease that resolves HJ intermediates. Cleaves cruciform DNA by making single-stranded nicks across the HJ at symmetrical positions within the homologous arms, yielding a 5'-phosphate and a 3'-hydroxyl group; requires a central core of homology in the junction. The consensus cleavage sequence is 5'-(A/T)TT(C/G)-3'. Cleavage occurs on the 3'-side of the TT dinucleotide at the point of strand exchange. HJ branch migration catalyzed by RuvA-RuvB allows RuvC to scan DNA until it finds its consensus sequence, where it cleaves and resolves the cruciform DNA. The sequence is that of Crossover junction endodeoxyribonuclease RuvC from Pseudomonas putida (strain W619).